Here is a 3391-residue protein sequence, read N- to C-terminus: Genome polyprotein (3391 aa).

Positions 1 to 15 (MNDQRKEAKNTPFNM) are interaction with host EXOC1. Residues 1–101 (MNDQRKEAKN…LNILNRRRRS (101 aa)) lie on the Cytoplasmic side of the membrane. The segment at 37 to 72 (MLQGRGPLKLYMALVAFLRFLTIPPTAGILKRWGTI) is hydrophobic; homodimerization of capsid protein C. Positions 101–114 (SAGMIIMLIPTVMA) are cleaved as a propeptide — ER anchor for the Capsid protein C, removed in mature form by serine protease NS3. Residues 101–114 (SAGMIIMLIPTVMA) constitute a propeptide, ER anchor for the capsid protein C, removed in mature form by serine protease NS3. Residues 102–122 (AGMIIMLIPTVMAFHLTTRNG) form a helical membrane-spanning segment. Residues 123–242 (EPHMIVSRQE…HVQRIETWIL (120 aa)) are Extracellular-facing. Asn183 carries an N-linked (GlcNAc...) asparagine; by host glycan. The helical transmembrane segment at 243–260 (RHPGFTMMAAILAYTIGT) threads the bilayer. Thr261 is a topological domain (cytoplasmic). Residues 262 to 280 (HFQRALILILLTAVTPSMT) traverse the membrane as a helical segment. The Extracellular segment spans residues 281 to 727 (MRCIGMSNRD…QVFGAIYGAA (447 aa)). 4 disulfides stabilise this stretch: Cys283–Cys310, Cys340–Cys401, Cys354–Cys385, and Cys372–Cys396. Asn347 carries an N-linked (GlcNAc...) asparagine; by host glycan. The tract at residues 378 to 391 (DRGWGNGCGLFGKG) is fusion peptide. N-linked (GlcNAc...) asparagine; by host glycosylation is present at Asn433. 2 disulfide bridges follow: Cys465/Cys565 and Cys582/Cys613. Residues 728-748 (FSGVSWTMKILIGVIITWIGM) traverse the membrane as a helical segment. Residues 749–752 (NSRS) are Cytoplasmic-facing. The helical transmembrane segment at 753 to 773 (TSLSVTLVLVGIVTLYLGVMV) threads the bilayer. Topologically, residues 774–1195 (QADSGCVVSW…MVGATMTDDI (422 aa)) are extracellular. Intrachain disulfides connect Cys779-Cys790, Cys830-Cys918, Cys954-Cys998, Cys1055-Cys1104, Cys1066-Cys1088, and Cys1087-Cys1091. Asn905 and Asn982 each carry an N-linked (GlcNAc...) asparagine; by host glycan. An N-linked (GlcNAc...) asparagine; by host glycan is attached at Asn1134. The helical transmembrane segment at 1196–1220 (GMGVTYLALLAAFKVRPTFAAGLLL) threads the bilayer. The Cytoplasmic segment spans residues 1221-1226 (RKLTSK). A helical membrane pass occupies residues 1227-1245 (ELMMTTIGIVLSSQSTIPE). Residues 1246–1269 (TILELTDALALGMMVLKMVRNMEK) lie on the Lumenal side of the membrane. Residues 1270-1290 (YQLAVTIMAILCVPNAVILQN) form a helical membrane-spanning segment. A topological domain (cytoplasmic) is located at residue Ala1291. Residues 1292–1310 (WKVSCTILAVVSVSPLFLT) traverse the membrane as a helical segment. Topologically, residues 1311 to 1317 (SSQQKTD) are lumenal. The helical transmembrane segment at 1318 to 1338 (WIPLALTIKGLNPTAIFLTTL) threads the bilayer. The Cytoplasmic portion of the chain corresponds to 1339-1346 (SRTSKKRS). Residues 1347 to 1367 (WPLNEAIMAVGMVSILASSLL) traverse the membrane as a helical segment. The Lumenal portion of the chain corresponds to 1368-1370 (KND). A helical transmembrane segment spans residues 1371–1391 (IPMTGPLVAGGLLTVCYVLTG). Residues 1392-1447 (RSADLELERAADVKWEDQAEISGSSPILSITISEDGSMSIKNEEEEQTLTILIRRG) are Cytoplasmic-facing. Positions 1398–1437 (LERAADVKWEDQAEISGSSPILSITISEDGSMSIKNEEEE) are interacts with and activates NS3 protease. An intramembrane region (helical) is located at residues 1448-1468 (LLVISGLFPVSIPITAAAWYL). Over 1469 to 2147 (WEVKKQRAGV…LSELPETLET (679 aa)) the chain is Cytoplasmic. The Peptidase S7 domain occupies 1476–1653 (AGVLWDVPSP…EKSIEDNPEI (178 aa)). Active-site charge relay system; for serine protease NS3 activity residues include His1526, Asp1550, and Ser1610. The Helicase ATP-binding domain maps to 1655 to 1811 (DDIFRKRRLT…QSNAPIIDEE (157 aa)). Residues 1659-1662 (RKRR) are important for RNA-binding. 1668-1675 (LHPGAGKT) contributes to the ATP binding site. Positions 1759–1762 (DEAH) match the DEAH box motif. The 168-residue stretch at 1821–1988 (SGHEWVTDFK…IIPSMFEPER (168 aa)) folds into the Helicase C-terminal domain. N6-acetyllysine; by host is present on Lys1863. The helical transmembrane segment at 2148–2168 (LLLLTLLATVTGGIFLFLMSA) threads the bilayer. At 2169–2170 (RG) the chain is on the lumenal side. Residues 2171 to 2191 (IGKMTLGMCCIITASILLWYA) constitute an intramembrane region (helical). Residue Gln2192 is a topological domain, lumenal. The helical transmembrane segment at 2193-2213 (IQPHWIAASIILEFFLIVLLI) threads the bilayer. At 2214 to 2228 (PEPEKQRTPQDNQLT) the chain is on the cytoplasmic side. The chain crosses the membrane as a helical span at residues 2229–2249 (YVVIAILTVVAATMANEMGFL). The Lumenal segment spans residues 2250–2274 (EKTKKDLGLGSIATQQPESNILDID). Residues 2275-2295 (LRPASAWTLYAVATTFVTPML) constitute an intramembrane region (helical). At 2296–2316 (RHSIENSSVNVSLTAIANQAT) the chain is on the lumenal side. Asn2301 and Asn2305 each carry an N-linked (GlcNAc...) asparagine; by host glycan. An intramembrane region (helical) is located at residues 2317–2337 (VLMGLGKGWPLSKMDIGVPLL). The Lumenal portion of the chain corresponds to 2338–2347 (AIGCYSQVNP). The chain crosses the membrane as a helical span at residues 2348 to 2368 (TTLTAALFLLVAHYAIIGPAL). The Cytoplasmic segment spans residues 2369-2413 (QAKASREAQKRAAAGIMKNPTVDGITVIDLDPIPYDPKFEKQLGQ). A helical transmembrane segment spans residues 2414-2434 (VMLLVLCVTQVLMMRTTWALC). Over 2435-2459 (EALTLATGPISTLSEGNPGRFWNTT) the chain is Lumenal. Asn2457 is a glycosylation site (N-linked (GlcNAc...) asparagine; by host). A helical membrane pass occupies residues 2460 to 2480 (IAVSMANIFRGSYLAGAGLLF). Over 2481–3391 (SIMKNTTNTR…REEEEAGVLW (911 aa)) the chain is Cytoplasmic. The 263-residue stretch at 2493-2755 (TGNIGETLGE…DVDLGSGTRN (263 aa)) folds into the mRNA cap 0-1 NS5-type MT domain. Residue Ser2547 participates in S-adenosyl-L-methionine binding. Ser2547 is modified (phosphoserine). The active-site For 2'-O-MTase activity is Lys2552. An SUMO-interacting motif motif is present at residues 2568–2571 (VVDL). Gly2577, Trp2578, Thr2595, Lys2596, Asp2622, and Val2623 together coordinate S-adenosyl-L-methionine. Asp2637 acts as the For 2'-O-MTase activity in catalysis. Ile2638 provides a ligand contact to S-adenosyl-L-methionine. Residues Lys2672 and Glu2708 each act as for 2'-O-MTase activity in the active site. Tyr2710 contacts S-adenosyl-L-methionine. Zn(2+)-binding residues include Glu2929, His2933, Cys2938, and Cys2941. Positions 3020 to 3169 (AMYADDTAGW…PLDDRLPSAL (150 aa)) constitute a RdRp catalytic domain. The Zn(2+) site is built by His3203, Cys3219, and Cys3338.

This sequence in the N-terminal section; belongs to the class I-like SAM-binding methyltransferase superfamily. mRNA cap 0-1 NS5-type methyltransferase family. As to quaternary structure, homodimer. Interacts (via N-terminus) with host EXOC1 (via C-terminus); this interaction results in EXOC1 degradation through the proteasome degradation pathway. In terms of assembly, forms heterodimers with envelope protein E in the endoplasmic reticulum and Golgi. Homodimer; in the endoplasmic reticulum and Golgi. Interacts with protein prM. Interacts with non-structural protein 1. As to quaternary structure, homodimer; Homohexamer when secreted. Interacts with envelope protein E. Interacts with host PRKAA1. In terms of assembly, interacts (via N-terminus) with serine protease NS3. Forms a heterodimer with serine protease NS3. May form homooligomers. As to quaternary structure, forms a heterodimer with NS2B. Interacts with NS4B. Interacts with unphosphorylated RNA-directed RNA polymerase NS5; this interaction stimulates RNA-directed RNA polymerase NS5 guanylyltransferase activity. Interacts with host SHFL. In terms of assembly, interacts with host MAVS; this interaction inhibits the synthesis of IFN-beta. Interacts with host SHFL. Interacts with host AUP1; the interaction occurs in the presence of Dengue virus NS4B and induces lipophagy which facilitates production of virus progeny particles. May interact with host SRPRA and SEC61G. Interacts with serine protease NS3. As to quaternary structure, homodimer. Interacts with host STAT2; this interaction inhibits the phosphorylation of the latter, and, when all viral proteins are present (polyprotein), targets STAT2 for degradation. Interacts with serine protease NS3. Interacts with host PAF1 complex; the interaction may prevent the recruitment of the PAF1 complex to interferon-responsive genes, and thus reduces the immune response. In terms of processing, specific enzymatic cleavages in vivo yield mature proteins. Cleavages in the lumen of endoplasmic reticulum are performed by host signal peptidase, whereas cleavages in the cytoplasmic side are performed by serine protease NS3. Signal cleavage at the 2K-4B site requires a prior NS3 protease-mediated cleavage at the 4A-2K site. Post-translationally, cleaved in post-Golgi vesicles by a host furin, releasing the mature small envelope protein M, and peptide pr. This cleavage is incomplete as up to 30% of viral particles still carry uncleaved prM. N-glycosylated. In terms of processing, N-glycosylated. The excreted form is glycosylated and this is required for efficient secretion of the protein from infected cells. Post-translationally, acetylated by host KAT5. Acetylation modulates NS3 RNA-binding and unwinding activities and plays an important positive role for viral replication. Sumoylation of RNA-directed RNA polymerase NS5 increases NS5 protein stability allowing proper viral RNA replication. In terms of processing, phosphorylated on serines residues. This phosphorylation may trigger NS5 nuclear localization.

Its subcellular location is the virion. The protein localises to the host nucleus. It localises to the host cytoplasm. The protein resides in the host perinuclear region. It is found in the secreted. Its subcellular location is the virion membrane. The protein localises to the host endoplasmic reticulum membrane. It localises to the host mitochondrion. The catalysed reaction is Selective hydrolysis of -Xaa-Xaa-|-Yaa- bonds in which each of the Xaa can be either Arg or Lys and Yaa can be either Ser or Ala.. The enzyme catalyses RNA(n) + a ribonucleoside 5'-triphosphate = RNA(n+1) + diphosphate. It catalyses the reaction a ribonucleoside 5'-triphosphate + H2O = a ribonucleoside 5'-diphosphate + phosphate + H(+). It carries out the reaction ATP + H2O = ADP + phosphate + H(+). The catalysed reaction is a 5'-end (5'-triphosphoguanosine)-ribonucleoside in mRNA + S-adenosyl-L-methionine = a 5'-end (N(7)-methyl 5'-triphosphoguanosine)-ribonucleoside in mRNA + S-adenosyl-L-homocysteine. The enzyme catalyses a 5'-end (N(7)-methyl 5'-triphosphoguanosine)-ribonucleoside in mRNA + S-adenosyl-L-methionine = a 5'-end (N(7)-methyl 5'-triphosphoguanosine)-(2'-O-methyl-ribonucleoside) in mRNA + S-adenosyl-L-homocysteine + H(+). Plays a role in virus budding by binding to the cell membrane and gathering the viral RNA into a nucleocapsid that forms the core of a mature virus particle. During virus entry, may induce genome penetration into the host cytoplasm after hemifusion induced by the surface proteins. Can migrate to the cell nucleus where it modulates host functions. Overcomes the anti-viral effects of host EXOC1 by sequestering and degrading the latter through the proteasome degradation pathway. Functionally, inhibits RNA silencing by interfering with host Dicer. Its function is as follows. Prevents premature fusion activity of envelope proteins in trans-Golgi by binding to envelope protein E at pH6.0. After virion release in extracellular space, gets dissociated from E dimers. In terms of biological role, acts as a chaperone for envelope protein E during intracellular virion assembly by masking and inactivating envelope protein E fusion peptide. prM is the only viral peptide matured by host furin in the trans-Golgi network probably to avoid catastrophic activation of the viral fusion activity in acidic Golgi compartment prior to virion release. prM-E cleavage is inefficient, and many virions are only partially matured. These uncleaved prM would play a role in immune evasion. May play a role in virus budding. Exerts cytotoxic effects by activating a mitochondrial apoptotic pathway through M ectodomain. May display a viroporin activity. Functionally, binds to host cell surface receptor and mediates fusion between viral and cellular membranes. Envelope protein is synthesized in the endoplasmic reticulum in the form of heterodimer with protein prM. They play a role in virion budding in the ER, and the newly formed immature particle is covered with 60 spikes composed of heterodimer between precursor prM and envelope protein E. The virion is transported to the Golgi apparatus where the low pH causes dissociation of PrM-E heterodimers and formation of E homodimers. prM-E cleavage is inefficient, and many virions are only partially matured. These uncleaved prM would play a role in immune evasion. Its function is as follows. Involved in immune evasion, pathogenesis and viral replication. Once cleaved off the polyprotein, is targeted to three destinations: the viral replication cycle, the plasma membrane and the extracellular compartment. Essential for viral replication. Required for formation of the replication complex and recruitment of other non-structural proteins to the ER-derived membrane structures. Excreted as a hexameric lipoparticle that plays a role against host immune response. Antagonizing the complement function. Binds to the host macrophages and dendritic cells. Inhibits signal transduction originating from Toll-like receptor 3 (TLR3). Mediates complement activation, which may contribute to the pathogenesis of the vascular leakage that occurs in severe dengue disease. Activates autophagy through the AMPK/ERK/mTOR signaling pathway. Mechanistically, acts as the assembly platform for STK11-AMPK interactions and promotes STK11-AMPK interactions. In turn, promotes phosphorylation of the AMPK kinase structural domain and activates AMPK, thereby positively regulating the AMPK/ERK/mTOR signaling pathway and inducing autophagy. In terms of biological role, disrupts the host endothelial glycocalyx layer of host pulmonary microvascular endothelial cells, inducing degradation of sialic acid and shedding of heparan sulfate proteoglycans. NS1 induces expression of sialidases, heparanase, and activates cathepsin L, which activates heparanase via enzymatic cleavage. These effects are probably linked to the endothelial hyperpermeability observed in severe dengue disease. Component of the viral RNA replication complex that functions in virion assembly and antagonizes the host immune response. Functionally, required cofactor for the serine protease function of NS3. May have membrane-destabilizing activity and form viroporins. Its function is as follows. Displays three enzymatic activities: serine protease, NTPase and RNA helicase. NS3 serine protease, in association with NS2B, performs its autocleavage and cleaves the polyprotein at dibasic sites in the cytoplasm: C-prM, NS2A-NS2B, NS2B-NS3, NS3-NS4A, NS4A-2K and NS4B-NS5. NS3 RNA helicase binds RNA and unwinds dsRNA in the 3' to 5' direction. In terms of biological role, regulates the ATPase activity of the NS3 helicase activity. NS4A allows NS3 helicase to conserve energy during unwinding. Plays a role in the inhibition of the host innate immune response. Interacts with host MAVS and thereby prevents the interaction between RIGI and MAVS. In turn, IFN-beta production is impaired. Interacts with host AUP1 which mediates induction of lipophagy in host cells and facilitates production of virus progeny particles. Functions as a signal peptide for NS4B and is required for the interferon antagonism activity of the latter. Functionally, induces the formation of ER-derived membrane vesicles where the viral replication takes place. Inhibits interferon (IFN)-induced host STAT1 phosphorylation and nuclear translocation, thereby preventing the establishment of cellular antiviral state by blocking the IFN-alpha/beta pathway. Its function is as follows. Replicates the viral (+) and (-) RNA genome, and performs the capping of genomes in the cytoplasm. NS5 methylates viral RNA cap at guanine N-7 and ribose 2'-O positions. Besides its role in RNA genome replication, also prevents the establishment of cellular antiviral state by blocking the interferon-alpha/beta (IFN-alpha/beta) signaling pathway. Inhibits host TYK2 and STAT2 phosphorylation, thereby preventing activation of JAK-STAT signaling pathway. May reduce immune responses by preventing the recruitment of the host PAF1 complex to interferon-responsive genes. The chain is Genome polyprotein from Dengue virus type 2 (strain 16681-PDK53) (DENV-2).